The following is a 211-amino-acid chain: Probable GTP-binding protein EngB (211 aa).

An EngB-type G domain is found at 26–200 (SGIEIAFAGR…RQKLDDWFAA (175 aa)). Residues 34 to 41 (GRSNAGKS), 61 to 65 (GRTRL), 79 to 82 (DLPG), 146 to 149 (TKAD), and 179 to 181 (FSS) each bind GTP. Positions 41 and 63 each coordinate Mg(2+).

Belongs to the TRAFAC class TrmE-Era-EngA-EngB-Septin-like GTPase superfamily. EngB GTPase family. Mg(2+) is required as a cofactor.

Necessary for normal cell division and for the maintenance of normal septation. The chain is Probable GTP-binding protein EngB from Sodalis glossinidius (strain morsitans).